A 340-amino-acid polypeptide reads, in one-letter code: uncharacterized protein (340 aa).

A helical membrane pass occupies residues 6 to 26 (ITFGLLVLMVCVILFVLYVQL).

The protein resides in the cell membrane. This is an uncharacterized protein from Bacillus subtilis (strain 168).